The following is a 728-amino-acid chain: 1,4-alpha-glucan branching enzyme GlgB (728 aa).

Asp405 acts as the Nucleophile in catalysis. Residue Glu458 is the Proton donor of the active site.

The protein belongs to the glycosyl hydrolase 13 family. GlgB subfamily. In terms of assembly, monomer.

The catalysed reaction is Transfers a segment of a (1-&gt;4)-alpha-D-glucan chain to a primary hydroxy group in a similar glucan chain.. Its pathway is glycan biosynthesis; glycogen biosynthesis. In terms of biological role, catalyzes the formation of the alpha-1,6-glucosidic linkages in glycogen by scission of a 1,4-alpha-linked oligosaccharide from growing alpha-1,4-glucan chains and the subsequent attachment of the oligosaccharide to the alpha-1,6 position. The sequence is that of 1,4-alpha-glucan branching enzyme GlgB from Escherichia coli O157:H7.